The chain runs to 342 residues: Inositol-tetrakisphosphate 1-kinase 1 (342 aa).

Positions 28 and 70 each coordinate 1D-myo-inositol 6-phosphate. Arg105 and Lys155 together coordinate ATP. Positions 116–332 (DHAADQDSTF…HKDGVGNQQE (217 aa)) constitute an ATP-grasp domain. 1D-myo-inositol 6-phosphate contacts are provided by Gly161 and His166. His166, Gln187, and Val190 together coordinate ATP. 1D-myo-inositol 6-phosphate is bound by residues Lys198 and Tyr200. Ser213 is a binding site for ATP. Residues 219–247 (PEDDASAQGSVSFSQVSNLPTERTAEEYY) are catalytic specificity elements (CSE). Residue Asn280 participates in 1D-myo-inositol 6-phosphate binding. Residue Asp282 coordinates Mg(2+). The ATP site is built by Ile296, Asp297, and Asn299. Positions 297 and 299 each coordinate Mg(2+). Residues Asn299, Gly303, and Lys306 each coordinate 1D-myo-inositol 6-phosphate.

This sequence belongs to the ITPK1 family. In terms of assembly, monomer. Requires Mg(2+) as cofactor. As to expression, expressed in the embryo of 15 day after pollination. Expressed in kernels at earlier stages but at very low levels. Expression in the embryo peaks at 15 days after pollination and then declines. No expression is detected from endosperm and vegetative tissues.

The enzyme catalyses 1D-myo-inositol 3,4,5,6-tetrakisphosphate + ATP = 1D-myo-inositol 1,3,4,5,6-pentakisphosphate + ADP + H(+). It carries out the reaction 1D-myo-inositol 1,3,4-trisphosphate + ATP = 1D-myo-inositol 1,3,4,5-tetrakisphosphate + ADP + H(+). The catalysed reaction is 1D-myo-inositol 1,3,4-trisphosphate + ATP = 1D-myo-inositol 1,3,4,6-tetrakisphosphate + ADP + H(+). It catalyses the reaction 1D-myo-inositol 1,2,3,4,5-pentakisphosphate + ATP = 3-diphospho-1D-myo-inositol 1,2,4,5-tetrakisphosphate + ADP. The enzyme catalyses 1D-myo-inositol hexakisphosphate + ATP = 5-diphospho-1D-myo-inositol 1,2,3,4,6-pentakisphosphate + ADP. Kinase that can phosphorylate various inositol polyphosphate such as Ins(3,4,5,6)P4 or Ins(1,3,4)P3 and participates in phytic acid biosynthesis in developing seeds. Phosphorylates Ins(3,4,5,6)P4 at position 1 to form Ins(1,3,4,5,6)P5. This reaction is thought to have regulatory importance, since Ins(3,4,5,6)P4 is an inhibitor of plasma membrane Ca(2+)-activated Cl(-) channels, while Ins(1,3,4,5,6)P5 is not. Also phosphorylates Ins(1,3,4)P3 on O-5 and O-6 to form Ins(1,3,4,6)P4, an essential molecule in the hexakisphosphate (InsP6) pathway. Also able to phosphorylate Ins(3,5,6)P3 but not Ins(1,4,5)P3, Ins(2,4,5)P3, Ins(1,3,4,6)P4 nor Ins(1,3,5,6)P4. Has higher specific activity on Ins(3,4,5,6)P4 than Ins(1,3,4)P3 and Ins(3,5,6)P3. Can also could use Ins(1,2,5,6)P4 as a substrate. Able to add a beta-phosphate to the 3 positions of Ins(1,2,3,4,5)P5 and to add beta-phosphate to InsP6 to yield 5-InsP7, thus exhibiting InsP6 kinase activity. Also has Ins(1,3,4,5,6)P5 phosphatase activity. The polypeptide is Inositol-tetrakisphosphate 1-kinase 1 (Zea mays (Maize)).